We begin with the raw amino-acid sequence, 169 residues long: MAQGDDNKQAIGQIIRQEQALIFPSLDENDAFSLGQRIRDIAVKDKLGIAIDISLWDRRLFFAATAGATADNIEWLRRKFNVVRRFHVSTYRLVLEQNREDRMFAPYKALDVADYALAGGGFPIRVSGAGVIGAVIVSGLPQREDHNLVVRAVAEHVGQDPVALALPAA.

It belongs to the UPF0303 family.

This chain is UPF0303 protein BOV_1367, found in Brucella ovis (strain ATCC 25840 / 63/290 / NCTC 10512).